A 70-amino-acid polypeptide reads, in one-letter code: Protein SlyX homolog (70 aa).

This sequence belongs to the SlyX family.

This is Protein SlyX homolog from Shewanella baltica (strain OS155 / ATCC BAA-1091).